The sequence spans 355 residues: MRLRTPLTELIGIEHPVVQTGMGWVAGARLVSATANAGGLGILASATMTLDELAAAITKVKAVTDKPFGVNIRADAADAGDRVELMIREGVRVASFALAPKQQLIARLKEAGAVVIPSIGAAKHARKVAAWGADAMIVQGGEGGGHTGPVATTLLLPSVLDAVAGTGIPVIAAGGFFDGRGLAAALCYGAAGVAMGTRFLLTSDSTVPDAVKRRYLQAGLDGTVVTTRVDGMPHRVLRTELVEKLESGSRARGFAAALRNAGKFRRMSQMTWRSMIRDGLTMRHGKELTWSQVLMAANTPMLLKAGLVDGNTEAGVLASGQVAGILDDLPSCKELIESIVLDAITHLQTASALVE.

FMN is bound by residues 21–23 (GMG), 173–175 (AGG), and 196–197 (GT).

Belongs to the nitronate monooxygenase family.

The catalysed reaction is (3aS,4S,5R,7aS)-5-hydroxy-7a-methyl-1-oxo-octahydro-1H-indene-4-carboxyl-CoA + NAD(+) = (5R,7aS)-5-hydroxy-7a-methyl-1-oxo-2,3,5,6,7,7a-hexahydro-1H-indene-carboxyl-CoA + NADH + H(+). It functions in the pathway steroid metabolism; cholesterol degradation. With respect to regulation, requires the presence of IpdF. Its function is as follows. Involved in the final steps of cholesterol and steroid degradation. Probably catalyzes the introduction of a double bound into the C ring of 5OH-HIC-CoA, leading to the formation of (5R,7aS)-5-hydroxy-7a-methyl-1-oxo-3,5,6,7-tetrahydro-2H-indene-4-carboxyl-CoA. This Mycobacterium tuberculosis (strain ATCC 25618 / H37Rv) protein is (3aS,4S,5R,7aS)-5-hydroxy-7a-methyl-1-oxo-octahydro-1H-indene-4-carboxyl-CoA dehydrogenase.